Consider the following 332-residue polypeptide: Glyceraldehyde-3-phosphate dehydrogenase 3 (332 aa).

Residues arginine 11, isoleucine 12, and aspartate 33 each coordinate NAD(+). Glycyl lysine isopeptide (Lys-Gly) (interchain with G-Cter in ubiquitin) cross-links involve residues lysine 46 and lysine 63. Threonine 120 lines the NAD(+) pocket. D-glyceraldehyde 3-phosphate is bound at residue 149-151 (SCT). Cysteine 150 functions as the Nucleophile in the catalytic mechanism. Cysteine persulfide occurs at positions 150 and 154. Residue lysine 160 forms a Glycyl lysine isopeptide (Lys-Gly) (interchain with G-Cter in URM1) linkage. Residues threonine 180, 209–210 (TG), and arginine 232 contribute to the D-glyceraldehyde 3-phosphate site. A Phosphoserine modification is found at serine 302. Residue lysine 307 forms a Glycyl lysine isopeptide (Lys-Gly) (interchain with G-Cter in URM1) linkage. 2 residues coordinate NAD(+): asparagine 314 and tyrosine 318.

The protein belongs to the glyceraldehyde-3-phosphate dehydrogenase family. In terms of assembly, homotetramer. In terms of processing, conjugated to URM1, a ubiquitin-like protein, in response to oxidative stresses. The attachment of URM1 to lysine residues exclusively depends on the presence of a peroxidatic cysteine in the target protein, with low specificity for the particular residue, motif, or structural context at which urmylation can occur. The URM1-conjugation reaction is mechanistically and directly coupled to the process of cysteine persulfidation, transfering the sulfur atom of the URM1 thiocarboxyl group to redox-active cysteine residues in the target protein if it is exposed to oxidative conditions. Post-translationally, persulfidated on specific redox-active cysteine residues. Persulfidation (also called protein S-sulfhydration) may provide a molecular mechanism that enables cells to protect vulnerable cysteine residues from reactive oxygen species (ROS) under stress conditions.

It is found in the cytoplasm. Its subcellular location is the mitochondrion. The catalysed reaction is D-glyceraldehyde 3-phosphate + phosphate + NAD(+) = (2R)-3-phospho-glyceroyl phosphate + NADH + H(+). It carries out the reaction NADH + H2O = (6R)-NADHX. The enzyme catalyses NADH + H2O = (6S)-NADHX. It catalyses the reaction NADPH + H2O = (6R)-NADPHX. The catalysed reaction is NADPH + H2O = (6S)-NADPHX. It functions in the pathway carbohydrate degradation; glycolysis; pyruvate from D-glyceraldehyde 3-phosphate: step 1/5. Its function is as follows. Glyceraldehyde-3-phosphate dehydrogenase (GAPDH) involved in glycolysis and gluconeogenesis. Catalyzes the reaction of glyceraldehyde-3-phosphate to 1,3 bis-phosphoglycerate. The contribution of the TDH1, TDH2, and TDH3 to the total glyceraldehyde-3-phosphate dehydrogenase activity is 10-15, 25-30, and 50-60%, respectively. Functionally, as a side activity, catalyzes the hydration of the nicotinamide ring of NADH or NADPH at the C6 position to give the corresponding hydrates, NADHX and NADPHX, which exist as R and S epimers, that cannot act as electron donors or acceptors and inhibit several dehydrogenases, making them toxic. The sequence is that of Glyceraldehyde-3-phosphate dehydrogenase 3 from Saccharomyces cerevisiae (strain ATCC 204508 / S288c) (Baker's yeast).